The primary structure comprises 295 residues: 2S seed storage protein (295 aa).

The first 20 residues, 1–20 (MAKQIVLALAFAALVAFATA), serve as a signal peptide directing secretion. Residues 21-161 (HTTIITTTIE…TITTTVTESN (141 aa)) constitute a propeptide that is removed on maturation. A compositionally biased stretch (polar residues) spans 195–208 (EQQMQQSPRSTRPY). The tract at residues 195–215 (EQQMQQSPRSTRPYQQRPGQQ) is disordered.

This sequence belongs to the 2S seed storage albumins family. Post-translationally, the 38 kDa precursor may be cleaved into two polypeptides of approximately the same size. The mature protein is composed of a single polypeptide containing one or more intra-molecular disulfide linkages.

Its function is as follows. This is a 2S seed storage protein. This chain is 2S seed storage protein (HAG5), found in Helianthus annuus (Common sunflower).